A 98-amino-acid polypeptide reads, in one-letter code: MPSISTNIILAFTAALTGMLVFRSHLMSSLLCLEGMMLSMFILSTLTIMNLHSTMSFMMPILLLVFAACEAAIGLALLVMMSNTYGLDLIQNLSLLQC.

A run of 3 helical transmembrane segments spans residues 2–22 (PSISTNIILAFTAALTGMLVF), 29–49 (SLLCLEGMMLSMFILSTLTIM), and 61–81 (ILLLVFAACEAAIGLALLVMM).

Belongs to the complex I subunit 4L family. Core subunit of respiratory chain NADH dehydrogenase (Complex I) which is composed of 45 different subunits.

The protein localises to the mitochondrion inner membrane. It catalyses the reaction a ubiquinone + NADH + 5 H(+)(in) = a ubiquinol + NAD(+) + 4 H(+)(out). Core subunit of the mitochondrial membrane respiratory chain NADH dehydrogenase (Complex I) which catalyzes electron transfer from NADH through the respiratory chain, using ubiquinone as an electron acceptor. Part of the enzyme membrane arm which is embedded in the lipid bilayer and involved in proton translocation. The polypeptide is NADH-ubiquinone oxidoreductase chain 4L (MT-ND4L) (Lepilemur seali (Seal's sportive lemur)).